Reading from the N-terminus, the 127-residue chain is Dual endothelin-1/VEGF signal peptide receptor (127 aa).

At 1 to 65 (MNALYVTTVP…EMKSRWNWGS (65 aa)) the chain is on the extracellular side. Residues 66 to 84 (ITCIICFTCVGSQLSMSSS) traverse the membrane as a helical segment. Residues 85 to 127 (KASNFSGPLQLYQRGIGHITNSYKRPQAPAWPCLSSGTMGRSH) lie on the Cytoplasmic side of the membrane.

As to expression, widely expressed with higher levels in kidney and aorta.

It localises to the cell membrane. Its function is as follows. Dual receptor for both endothelin-1 and the signal sequence of vascular endothelial growth factor A. Does not act as a receptor for angiotensin-2. Does not bind the VEGFA mature protein. May play a role in angiogenesis with a significant role in cardiovascular and neural development. This chain is Dual endothelin-1/VEGF signal peptide receptor, found in Mus musculus (Mouse).